The primary structure comprises 63 residues: Cecropin-A1 (63 aa).

An N-terminal signal peptide occupies residues 1 to 19 (MNFYNIFVFVALILAITIG). Arg62 is subject to Arginine amide.

This sequence belongs to the cecropin family.

The protein resides in the secreted. Cecropins have lytic and antibacterial activity against several Gram-positive and Gram-negative bacteria. This chain is Cecropin-A1 (CecA1), found in Drosophila simulans (Fruit fly).